Here is a 461-residue protein sequence, read N- to C-terminus: Cysteine--tRNA ligase (461 aa).

C28 lines the Zn(2+) pocket. Residues 30–40 (VTIYDLCHIGH) carry the 'HIGH' region motif. Zn(2+)-binding residues include C209, H234, and E238. Positions 266–270 (KMSKS) match the 'KMSKS' region motif. ATP is bound at residue K269.

This sequence belongs to the class-I aminoacyl-tRNA synthetase family. In terms of assembly, monomer. The cofactor is Zn(2+).

The protein resides in the cytoplasm. It catalyses the reaction tRNA(Cys) + L-cysteine + ATP = L-cysteinyl-tRNA(Cys) + AMP + diphosphate. In Hamiltonella defensa subsp. Acyrthosiphon pisum (strain 5AT), this protein is Cysteine--tRNA ligase.